The chain runs to 64 residues: Large ribosomal subunit protein bL32 (64 aa).

The disordered stretch occupies residues Met-1 to Trp-20.

Belongs to the bacterial ribosomal protein bL32 family.

In Bifidobacterium adolescentis (strain ATCC 15703 / DSM 20083 / NCTC 11814 / E194a), this protein is Large ribosomal subunit protein bL32.